Consider the following 330-residue polypeptide: 4-hydroxythreonine-4-phosphate dehydrogenase (330 aa).

Positions 135 and 136 each coordinate substrate. Positions 165, 210, and 266 each coordinate a divalent metal cation. Lysine 274, asparagine 283, and arginine 292 together coordinate substrate.

The protein belongs to the PdxA family. In terms of assembly, homodimer. Requires Zn(2+) as cofactor. Mg(2+) serves as cofactor. The cofactor is Co(2+).

The protein resides in the cytoplasm. It catalyses the reaction 4-(phosphooxy)-L-threonine + NAD(+) = 3-amino-2-oxopropyl phosphate + CO2 + NADH. It participates in cofactor biosynthesis; pyridoxine 5'-phosphate biosynthesis; pyridoxine 5'-phosphate from D-erythrose 4-phosphate: step 4/5. Functionally, catalyzes the NAD(P)-dependent oxidation of 4-(phosphooxy)-L-threonine (HTP) into 2-amino-3-oxo-4-(phosphooxy)butyric acid which spontaneously decarboxylates to form 3-amino-2-oxopropyl phosphate (AHAP). This is 4-hydroxythreonine-4-phosphate dehydrogenase from Vibrio cholerae serotype O1 (strain ATCC 39315 / El Tor Inaba N16961).